Reading from the N-terminus, the 106-residue chain is ATP-dependent Clp protease adapter protein ClpS (106 aa).

The protein belongs to the ClpS family. As to quaternary structure, binds to the N-terminal domain of the chaperone ClpA.

Involved in the modulation of the specificity of the ClpAP-mediated ATP-dependent protein degradation. The sequence is that of ATP-dependent Clp protease adapter protein ClpS from Salmonella agona (strain SL483).